We begin with the raw amino-acid sequence, 92 residues long: Small ribosomal subunit protein uS19c (92 aa).

Belongs to the universal ribosomal protein uS19 family.

Its subcellular location is the plastid. The protein localises to the chloroplast. In terms of biological role, protein S19 forms a complex with S13 that binds strongly to the 16S ribosomal RNA. In Chaetosphaeridium globosum (Charophycean green alga), this protein is Small ribosomal subunit protein uS19c.